Consider the following 791-residue polypeptide: Leucine-rich repeat-containing protein SOG2 (791 aa).

The segment at Met-1–Asn-28 is disordered. The segment covering Arg-8–Ala-19 has biased composition (basic and acidic residues). LRR repeat units lie at residues Ser-43–Tyr-64, Asn-67–Leu-88, Arg-90–Cys-111, Gln-113–Phe-134, Asn-138–Thr-159, and Lys-163–Gln-183. Thr-214 carries the post-translational modification Phosphothreonine. 2 disordered regions span residues Ala-454–Ala-506 and His-534–Gln-569. Residues Ser-469–Thr-486 are compositionally biased toward low complexity. Residues Asn-544–Gln-569 show a composition bias toward polar residues.

It localises to the cytoplasm. Its function is as follows. Required for proper cell morphogenesis and cell separation after mitosis. Functions in the RAM (regulation of ACE2 activity and cellular morphogenesis) signaling network and is required for proper ACE2 localization and CBK1 kinase activity. The chain is Leucine-rich repeat-containing protein SOG2 from Saccharomyces cerevisiae (strain ATCC 204508 / S288c) (Baker's yeast).